The following is a 339-amino-acid chain: Phenylalanine--tRNA ligase alpha subunit (339 aa).

Mg(2+) is bound at residue E254.

The protein belongs to the class-II aminoacyl-tRNA synthetase family. Phe-tRNA synthetase alpha subunit type 1 subfamily. Tetramer of two alpha and two beta subunits. Mg(2+) serves as cofactor.

The protein localises to the cytoplasm. The enzyme catalyses tRNA(Phe) + L-phenylalanine + ATP = L-phenylalanyl-tRNA(Phe) + AMP + diphosphate + H(+). The polypeptide is Phenylalanine--tRNA ligase alpha subunit (Clostridium tetani (strain Massachusetts / E88)).